A 151-amino-acid chain; its full sequence is Glycosylation-dependent cell adhesion molecule 1 (151 aa).

The first 19 residues, 1 to 19 (MKFFTVLLFVSLAATSLAL), serve as a signal peptide directing secretion. The tract at residues 29-123 (MKTQPTDAIP…ENLTKSSQTV (95 aa)) is disordered. Residues 42 to 52 (STPTSYTSEES) are compositionally biased toward low complexity. The span at 53-71 (TSSKDLSKEPSIFREELIS) shows a compositional bias: basic and acidic residues. Phosphoserine occurs at positions 54, 59, 63, and 71. The span at 103 to 114 (RPTTSAATTSEE) shows a compositional bias: low complexity. N-linked (GlcNAc...) asparagine glycosylation is present at N115.

It belongs to the PP3/GlyCAM-1 family. Extensively O-glycosylated. In terms of tissue distribution, lymph nodes. Associated with the lumenal surface of the high endothelial venules of peripheral lymph nodes.

The protein localises to the cell membrane. Functionally, adhesion molecule that accomplishes cell binding by presenting carbohydrate(s) to the lectin domain of L-selectin. The sequence is that of Glycosylation-dependent cell adhesion molecule 1 (Glycam1) from Mus musculus (Mouse).